We begin with the raw amino-acid sequence, 175 residues long: Type-2 ice-structuring protein (175 aa).

An N-terminal signal peptide occupies residues methionine 1–alanine 16. The propeptide occupies alanine 17–lysine 33. In terms of domain architecture, C-type lectin spans threonine 36–alanine 163. Cystine bridges form between cysteine 38–cysteine 49, cysteine 66–cysteine 159, cysteine 103–cysteine 134, cysteine 123–cysteine 145, and cysteine 135–cysteine 151.

It is found in the secreted. In terms of biological role, antifreeze proteins lower the blood freezing point. The chain is Type-2 ice-structuring protein from Osmerus mordax (Rainbow smelt).